The sequence spans 189 residues: Interferon alpha-7 (189 aa).

The N-terminal stretch at 1 to 23 (MARSFSLLMVVLVLSYKSICSLG) is a signal peptide. 2 disulfide bridges follow: Cys24–Cys122 and Cys52–Cys162.

This sequence belongs to the alpha/beta interferon family.

Its subcellular location is the secreted. Produced by macrophages, IFN-alpha have antiviral activities. Interferon stimulates the production of two enzymes: a protein kinase and an oligoadenylate synthetase. This Homo sapiens (Human) protein is Interferon alpha-7 (IFNA7).